A 549-amino-acid chain; its full sequence is Polynucleotide 5'-hydroxyl-kinase nol-9 (549 aa).

190–197 is an ATP binding site; that stretch reads GHKGAGKS.

It belongs to the Clp1 family. NOL9/GRC3 subfamily.

Its subcellular location is the nucleus. It is found in the nucleolus. In terms of biological role, polynucleotide 5'-kinase involved in rRNA processing. The sequence is that of Polynucleotide 5'-hydroxyl-kinase nol-9 (nol-9) from Caenorhabditis elegans.